The following is a 298-amino-acid chain: Acetyl-coenzyme A carboxylase carboxyl transferase subunit beta (298 aa).

Residues M1–P21 form a disordered region. The CoA carboxyltransferase N-terminal domain occupies P41–P298. Zn(2+) is bound by residues C45, C48, C64, and C67. A C4-type zinc finger spans residues C45 to C67.

It belongs to the AccD/PCCB family. In terms of assembly, acetyl-CoA carboxylase is a heterohexamer composed of biotin carboxyl carrier protein (AccB), biotin carboxylase (AccC) and two subunits each of ACCase subunit alpha (AccA) and ACCase subunit beta (AccD). The cofactor is Zn(2+).

It localises to the cytoplasm. The enzyme catalyses N(6)-carboxybiotinyl-L-lysyl-[protein] + acetyl-CoA = N(6)-biotinyl-L-lysyl-[protein] + malonyl-CoA. The protein operates within lipid metabolism; malonyl-CoA biosynthesis; malonyl-CoA from acetyl-CoA: step 1/1. In terms of biological role, component of the acetyl coenzyme A carboxylase (ACC) complex. Biotin carboxylase (BC) catalyzes the carboxylation of biotin on its carrier protein (BCCP) and then the CO(2) group is transferred by the transcarboxylase to acetyl-CoA to form malonyl-CoA. The protein is Acetyl-coenzyme A carboxylase carboxyl transferase subunit beta of Acinetobacter baumannii (strain AYE).